Here is a 2552-residue protein sequence, read N- to C-terminus: Protein TIC 214 (2552 aa).

The next 6 membrane-spanning stretches (helical) occupy residues 15-35 (LIFG…SYLF), 54-74 (LSYG…YLPF), 78-98 (LSNF…QFFW), 119-136 (TLAF…YTFF), 154-174 (FKIL…LICI), and 243-263 (ILAT…PIPF). The interval 304-325 (EEQKKDEKSADEEKKRAVEEEN) is disordered. Over residues 305-322 (EQKKDEKSADEEKKRAVE) the composition is skewed to basic and acidic residues. The next 3 helical transmembrane spans lie at 362–382 (TLYT…AFLF), 423–443 (PFLV…SVYI), and 452–472 (FLFN…HFFF). The tract at residues 2045–2077 (MKAEEQKKIDEEYEEKKEKRKKEQEEQGKAFDE) is disordered. Residues 2416–2511 (RRRRQLRIVN…IKKKLMRLRF (96 aa)) adopt a coiled-coil conformation.

Belongs to the TIC214 family. In terms of assembly, part of the Tic complex.

The protein resides in the plastid. It localises to the chloroplast inner membrane. Involved in protein precursor import into chloroplasts. May be part of an intermediate translocation complex acting as a protein-conducting channel at the inner envelope. This Pelargonium hortorum (Common geranium) protein is Protein TIC 214.